The chain runs to 189 residues: Riboflavin kinase (189 aa).

Thr42 and Asn44 together coordinate Mg(2+). The active-site Nucleophile is Glu124.

The protein belongs to the flavokinase family. Zn(2+) is required as a cofactor. Mg(2+) serves as cofactor.

It carries out the reaction riboflavin + ATP = FMN + ADP + H(+). Its pathway is cofactor biosynthesis; FMN biosynthesis; FMN from riboflavin (ATP route): step 1/1. Its function is as follows. Catalyzes the phosphorylation of riboflavin (vitamin B2) to form flavin mononucleotide (FMN) coenzyme. In Candida glabrata (strain ATCC 2001 / BCRC 20586 / JCM 3761 / NBRC 0622 / NRRL Y-65 / CBS 138) (Yeast), this protein is Riboflavin kinase (FMN1).